The chain runs to 341 residues: Probable GDP-mannose transporter 2 (341 aa).

The Cytoplasmic portion of the chain corresponds to 1 to 11 (MSKHKHEWTES). The helical transmembrane segment at 12 to 32 (VANSGPASILSYCASSILMTV) threads the bilayer. Over 33-46 (TNKFVVNLDNFNMN) the chain is Lumenal. Residues 47-67 (FVMLFVQSLVCTVTLCILRIV) traverse the membrane as a helical segment. The Cytoplasmic portion of the chain corresponds to 68-85 (GVANFRSLNRTDVKNWFP). A helical membrane pass occupies residues 86-106 (ISLLLVLMIYTSLKSLQYLAV). Residue Pro-107 is a topological domain, lumenal. Residues 108–128 (IYTIFKNLTIILIAYGEVLFF) form a helical membrane-spanning segment. The Cytoplasmic portion of the chain corresponds to 129–139 (GGKVTSMELTS). A helical transmembrane segment spans residues 140 to 160 (FIMMVLSSVVATWGDQQAIAI). At 161 to 176 (KASSLEDLDQELVEST) the chain is on the lumenal side. Residues 177–197 (IFVLNPGYLWMFTNCISSALF) traverse the membrane as a helical segment. At 198–214 (VLIMRKRIRLTNFKDYD) the chain is on the cytoplasmic side. A helical transmembrane segment spans residues 215 to 235 (TMFYNNVLALPLLLVFSFIME). The Lumenal segment spans residues 236–251 (DWSTKNLSVNLSADSL). N-linked (GlcNAc...) asparagine glycosylation is found at Asn-241 and Asn-245. The chain crosses the membrane as a helical span at residues 252 to 272 (AAMVISGLMSVGISYCSGWCV). The Cytoplasmic segment spans residues 273–278 (RVTSST). Residues 279 to 299 (TYSMVGALNKLPIALAGLVFF) form a helical membrane-spanning segment. The Lumenal portion of the chain corresponds to 300-303 (DAPK). A helical membrane pass occupies residues 304 to 324 (NFLSFFSIFLGFLSGLLYAVA). Residues 325-341 (KQKKIQQQKVLAATLEK) lie on the Cytoplasmic side of the membrane.

It belongs to the TPT transporter family. SLC35D subfamily.

It is found in the golgi apparatus membrane. Its subcellular location is the cytoplasmic vesicle membrane. It localises to the endoplasmic reticulum membrane. Involved in the import of GDP-mannose from the cytoplasm into the Golgi lumen. This Saccharomyces cerevisiae (strain Lalvin EC1118 / Prise de mousse) (Baker's yeast) protein is Probable GDP-mannose transporter 2 (HVG1).